A 294-amino-acid polypeptide reads, in one-letter code: Cell division control protein 2 homolog A (294 aa).

One can recognise a Protein kinase domain in the interval 4 to 287 (YEKVEKIGEG…ARNALQHEYF (284 aa)). Residues 10–18 (IGEGTYGVV) and K33 each bind ATP. Position 14 is a phosphothreonine (T14). Y15 bears the Phosphotyrosine mark. Catalysis depends on D127, which acts as the Proton acceptor. T161 is modified (phosphothreonine; by CAK).

The protein belongs to the protein kinase superfamily. CMGC Ser/Thr protein kinase family. CDC2/CDKX subfamily.

It catalyses the reaction L-seryl-[protein] + ATP = O-phospho-L-seryl-[protein] + ADP + H(+). The catalysed reaction is L-threonyl-[protein] + ATP = O-phospho-L-threonyl-[protein] + ADP + H(+). The enzyme catalyses [DNA-directed RNA polymerase] + ATP = phospho-[DNA-directed RNA polymerase] + ADP + H(+). Its activity is regulated as follows. Phosphorylation at Thr-14 or Tyr-15 inactivates the enzyme, while phosphorylation at Thr-161 activates it. In terms of biological role, plays a key role in the control of the eukaryotic cell cycle. This is Cell division control protein 2 homolog A (CDC2A) from Antirrhinum majus (Garden snapdragon).